The following is a 363-amino-acid chain: Aminomethyltransferase (363 aa).

It belongs to the GcvT family. In terms of assembly, the glycine cleavage system is composed of four proteins: P, T, L and H.

The catalysed reaction is N(6)-[(R)-S(8)-aminomethyldihydrolipoyl]-L-lysyl-[protein] + (6S)-5,6,7,8-tetrahydrofolate = N(6)-[(R)-dihydrolipoyl]-L-lysyl-[protein] + (6R)-5,10-methylene-5,6,7,8-tetrahydrofolate + NH4(+). The glycine cleavage system catalyzes the degradation of glycine. This chain is Aminomethyltransferase, found in Staphylococcus aureus (strain N315).